We begin with the raw amino-acid sequence, 1533 residues long: Protein TALPID3 (1533 aa).

The interval 32-57 (LSANKRLPVGTGTSLNGTSRGSSDLT) is disordered. Over residues 42-57 (TGTSLNGTSRGSSDLT) the composition is skewed to polar residues. Residues 182 to 223 (QSDLEAKVNSVTELLSKLQETDKHLQRVTEQQTSIQRKQEKL) adopt a coiled-coil conformation. A compositionally biased stretch (basic and acidic residues) spans 309–321 (KEVEDTSFDKQKS). 2 disordered regions span residues 309 to 339 (KEVE…VSRD) and 377 to 400 (LTRK…TPEK). Ser406 carries the phosphoserine modification. The stretch at 467-501 (SVLKDAEKILRGVQNNKKVLEENLEAIIRAKDGAA) forms a coiled coil. The required for centrosomal localization stretch occupies residues 467–554 (SVLKDAEKIL…YEQKRFDQKN (88 aa)). Residues 546–575 (EQKRFDQKNQRTKKGQNMTKDIRTNTQDKT) form a disordered region. A compositionally biased stretch (polar residues) spans 560-575 (GQNMTKDIRTNTQDKT). Phosphothreonine is present on residues Thr1042 and Thr1046. A Phosphoserine modification is found at Ser1050. Thr1063 is modified (phosphothreonine). Ser1066 is subject to Phosphoserine. Residues 1129–1156 (SSPELPKPWGDGDLPLEEENPNSPQEEL) are disordered.

It belongs to the TALPID3 family. In terms of assembly, interacts with CCP110, CEP290, CEP97, KIF24. In terms of tissue distribution, ubiquitously expressed. Expressed in photoreceptor cells (at protein level).

The protein resides in the cytoplasm. It is found in the cytoskeleton. It localises to the microtubule organizing center. Its subcellular location is the centrosome. The protein localises to the photoreceptor inner segment. The protein resides in the centriole. It is found in the cilium basal body. Functionally, required for ciliogenesis and sonic hedgehog/SHH signaling. Required for the centrosomal recruitment of RAB8A and for the targeting of centriole satellite proteins to centrosomes such as of PCM1. May play a role in early ciliogenesis in the disappearance of centriolar satellites that preceeds ciliary vesicle formation. Involved in regulation of cell intracellular organization. Involved in regulation of cell polarity. Required for asymmetrical localization of CEP120 to daughter centrioles. The sequence is that of Protein TALPID3 (KIAA0586) from Homo sapiens (Human).